The chain runs to 277 residues: Pantothenate synthetase (277 aa).

26 to 33 (MGNLHEGH) contacts ATP. Catalysis depends on His-33, which acts as the Proton donor. (R)-pantoate is bound at residue Gln-57. Position 57 (Gln-57) interacts with beta-alanine. 144 to 147 (GKKD) is a binding site for ATP. Residue Gln-150 participates in (R)-pantoate binding. ATP contacts are provided by residues Val-173 and 181-184 (LSSR).

Belongs to the pantothenate synthetase family. In terms of assembly, homodimer.

It is found in the cytoplasm. The enzyme catalyses (R)-pantoate + beta-alanine + ATP = (R)-pantothenate + AMP + diphosphate + H(+). Its pathway is cofactor biosynthesis; (R)-pantothenate biosynthesis; (R)-pantothenate from (R)-pantoate and beta-alanine: step 1/1. In terms of biological role, catalyzes the condensation of pantoate with beta-alanine in an ATP-dependent reaction via a pantoyl-adenylate intermediate. This Paraburkholderia xenovorans (strain LB400) protein is Pantothenate synthetase.